The following is a 485-amino-acid chain: Glutamyl-tRNA(Gln) amidotransferase subunit A (485 aa).

Catalysis depends on charge relay system residues K79 and S154. The active-site Acyl-ester intermediate is S178.

It belongs to the amidase family. GatA subfamily. In terms of assembly, heterotrimer of A, B and C subunits.

The enzyme catalyses L-glutamyl-tRNA(Gln) + L-glutamine + ATP + H2O = L-glutaminyl-tRNA(Gln) + L-glutamate + ADP + phosphate + H(+). Allows the formation of correctly charged Gln-tRNA(Gln) through the transamidation of misacylated Glu-tRNA(Gln) in organisms which lack glutaminyl-tRNA synthetase. The reaction takes place in the presence of glutamine and ATP through an activated gamma-phospho-Glu-tRNA(Gln). The protein is Glutamyl-tRNA(Gln) amidotransferase subunit A of Clostridium botulinum (strain Langeland / NCTC 10281 / Type F).